The sequence spans 106 residues: Large ribosomal subunit protein uL24 (106 aa).

It belongs to the universal ribosomal protein uL24 family. As to quaternary structure, part of the 50S ribosomal subunit.

Its function is as follows. One of two assembly initiator proteins, it binds directly to the 5'-end of the 23S rRNA, where it nucleates assembly of the 50S subunit. Functionally, one of the proteins that surrounds the polypeptide exit tunnel on the outside of the subunit. The sequence is that of Large ribosomal subunit protein uL24 from Parabacteroides distasonis (strain ATCC 8503 / DSM 20701 / CIP 104284 / JCM 5825 / NCTC 11152).